The following is a 565-amino-acid chain: MSKEFDYIIVGAGSAGNTLATRLTEDASVSVLLLEAGGPDYRFDFRTQMPAALAFPLQGRRYNWAYETDPEPFMDGRRMECGRGKGLGGSSLINGMCYIRGNAMDFDGWAELPGLEDWTYLDCLPYFRKAETRDIGPNDYHGGEGPVSVATPKAGNNPLFHAMVEAGVQAGYPRTEDLNGYQQEGFGPMDRSVTKKGRRSSTARGYLDQAKKRPNLTIVTHALSDRVLFDGKRAVGVTYLVGDSEERVEARARKEVIVSSGAIASPQLLQRSGVGPRALLESLDIPVVHDLPGVGENLQDHLELYLQYACTQPVSLYPSLLWWNQPAIGAEWLFNGTGIGASNQFEAGGFIRTRPEFKWPNIQYHFLPVAINYNGSNGVKEHGFQAHMGSMRSPARGRIQAKSKDPRQHPSILFNYMSTEQDWQEFRDGIRLTREIMAQPALDAFRGREISPGAHVQTDEELDKFIREHAETAFHPSCSCKMGTDDMAVVDGEGRVHGMQGLRVVDASIMPLIITGNLNATTIMIAEKISDKIRGRKPLPRSTAKYYVAGDAPVKGKALREVKQA.

Position 6 to 35 (6 to 35) interacts with FAD; the sequence is DYIIVGAGSAGNTLATRLTEDASVSVLLLE. The interval 182-203 is disordered; that stretch reads QQEGFGPMDRSVTKKGRRSSTA. H475 serves as the catalytic Proton acceptor.

The protein belongs to the GMC oxidoreductase family. FAD is required as a cofactor.

The enzyme catalyses choline + A = betaine aldehyde + AH2. The catalysed reaction is betaine aldehyde + NAD(+) + H2O = glycine betaine + NADH + 2 H(+). The protein operates within amine and polyamine biosynthesis; betaine biosynthesis via choline pathway; betaine aldehyde from choline (cytochrome c reductase route): step 1/1. Functionally, involved in the biosynthesis of the osmoprotectant glycine betaine. Catalyzes the oxidation of choline to betaine aldehyde and betaine aldehyde to glycine betaine at the same rate. The protein is Oxygen-dependent choline dehydrogenase of Pseudomonas entomophila (strain L48).